We begin with the raw amino-acid sequence, 222 residues long: NAD(P)H-hydrate epimerase (222 aa).

In terms of domain architecture, YjeF N-terminal spans 9–209; that stretch reads MQQIDSYTIE…DIGLRLPEDF (201 aa). 57–61 is a binding site for (6S)-NADPHX; the sequence is NNGAD. Residues Asn-58 and Asp-119 each coordinate K(+). (6S)-NADPHX contacts are provided by residues 123 to 129 and Asp-152; that span reads GVGLNNT. Thr-155 contributes to the K(+) binding site.

This sequence belongs to the NnrE/AIBP family. The cofactor is K(+).

It carries out the reaction (6R)-NADHX = (6S)-NADHX. It catalyses the reaction (6R)-NADPHX = (6S)-NADPHX. In terms of biological role, catalyzes the epimerization of the S- and R-forms of NAD(P)HX, a damaged form of NAD(P)H that is a result of enzymatic or heat-dependent hydration. This is a prerequisite for the S-specific NAD(P)H-hydrate dehydratase to allow the repair of both epimers of NAD(P)HX. In Leuconostoc citreum (strain KM20), this protein is NAD(P)H-hydrate epimerase.